Consider the following 98-residue polypeptide: Co-chaperonin GroES (98 aa).

This sequence belongs to the GroES chaperonin family. As to quaternary structure, heptamer of 7 subunits arranged in a ring. Interacts with the chaperonin GroEL.

Its subcellular location is the cytoplasm. In terms of biological role, together with the chaperonin GroEL, plays an essential role in assisting protein folding. The GroEL-GroES system forms a nano-cage that allows encapsulation of the non-native substrate proteins and provides a physical environment optimized to promote and accelerate protein folding. GroES binds to the apical surface of the GroEL ring, thereby capping the opening of the GroEL channel. The sequence is that of Co-chaperonin GroES from Corynebacterium diphtheriae (strain ATCC 700971 / NCTC 13129 / Biotype gravis).